Here is a 146-residue protein sequence, read N- to C-terminus: MEVIRVKINLCFYAESKLDIMPNHVLGVIIIDNIRSIYGEEGLIAYCMERLVPLCMYKGERTVYNHGRWKLVTHLSYLIDRPTNPMLLRIKEREIEEVMSVHIMDENVGQLYFKLELQQSDFNFLKHKLDPAIKAEGEPPKKVTLI.

This chain is Protein beta, found in Adelaide River virus (ARV).